Consider the following 134-residue polypeptide: Holo-[acyl-carrier-protein] synthase (134 aa).

Mg(2+) contacts are provided by Asp8 and Glu57.

This sequence belongs to the P-Pant transferase superfamily. AcpS family. Mg(2+) serves as cofactor.

It localises to the cytoplasm. The catalysed reaction is apo-[ACP] + CoA = holo-[ACP] + adenosine 3',5'-bisphosphate + H(+). Functionally, transfers the 4'-phosphopantetheine moiety from coenzyme A to a Ser of acyl-carrier-protein. The sequence is that of Holo-[acyl-carrier-protein] synthase from Brucella abortus (strain S19).